The sequence spans 130 residues: MSQAQYAGTGRRKNAVARVRLVPGTGKITVNKKDVEEYIPHADLRLVINQPFAVTSTVGSYDVFVNVVGGGYAGQSGAIRHGIARALLQVDPDFRDSLKRAGLLTRDSRKVERKKPGLKKARKASQFSKR.

The disordered stretch occupies residues Arg-106–Arg-130. Positions Val-111–Arg-130 are enriched in basic residues.

Belongs to the universal ribosomal protein uS9 family.

The protein is Small ribosomal subunit protein uS9 of Streptococcus pneumoniae serotype 2 (strain D39 / NCTC 7466).